The sequence spans 768 residues: Cullin-3-B (768 aa).

The disordered stretch occupies residues 677–698; that stretch reads VAAKQGESDPERKETRQKVDDD. Basic and acidic residues predominate over residues 682–698; it reads GESDPERKETRQKVDDD. A Cullin neddylation domain is found at 698-760; that stretch reads DRKHEIEAAI…REYLARTPED (63 aa). A Glycyl lysine isopeptide (Lys-Gly) (interchain with G-Cter in NEDD8) cross-link involves residue K712.

This sequence belongs to the cullin family. As to quaternary structure, component of multiple BCR (BTB-CUL3-RBX1) E3 ubiquitin-protein ligase complexes formed of cul3, rbx1 and a variable BTB domain-containing protein acting as both, adapter to cullin and substrate recognition subunit. Interacts with btbd6. Post-translationally, neddylated. Attachment of NEDD8 is required for the E3 ubiquitin-protein ligase activity of the SCF-like complex.

Its subcellular location is the nucleus. The protein operates within protein modification; protein ubiquitination. In terms of biological role, probable core component of cullin-based SCF-like E3 ubiquitin-protein ligase complexes which mediate the ubiquitination and subsequent proteasomal degradation of target proteins. The E3 ubiquitin-protein ligase activity of the complex is dependent on the neddylation of the cullin subunit. Involved in ER-Golgi transport by regulating the size of COPII coats, thereby playing a key role in collagen export, which is required for embryonic stem (ES) cells division. May play a role in the regulation of mittotic entry via ubiquitination of aurka. The polypeptide is Cullin-3-B (cul3b) (Xenopus laevis (African clawed frog)).